The chain runs to 476 residues: WD repeat, SAM and U-box domain-containing protein 1 (476 aa).

WD repeat units follow at residues 10–47 (DHGD…ELPH), 52–91 (FHTY…MLAV), 95–134 (PSGS…LYRC), 137–176 (VKDG…LHSE), 178–228 (AHDL…LGFE), 237–276 (GHCA…ILHT), and 279–318 (QHTR…LCQA). The region spanning 332–396 (WSEEDVSTWL…LRKIEELRTK (65 aa)) is the SAM domain. One can recognise a U-box domain in the interval 403 to 476 (GIPDEFICPI…INRWLETHQK (74 aa)). Thr-458 carries the phosphothreonine modification.

This Homo sapiens (Human) protein is WD repeat, SAM and U-box domain-containing protein 1 (WDSUB1).